The primary structure comprises 461 residues: Photosystem II CP43 reaction center protein (461 aa).

Helical transmembrane passes span 57 to 81 (LFEV…SHLA), 122 to 143 (LRGP…KDKN), 166 to 188 (KAMF…RIIS), 243 to 263 (KPFG…LSYS), and 279 to 300 (WYNN…ASQS). Glu-355 contacts [CaMn4O5] cluster. Residues 435–459 (RARAAAAGFEKGIDRATEPVLAMRD) form a helical membrane-spanning segment.

This sequence belongs to the PsbB/PsbC family. PsbC subfamily. PSII is composed of 1 copy each of membrane proteins PsbA, PsbB, PsbC, PsbD, PsbE, PsbF, PsbH, PsbI, PsbJ, PsbK, PsbL, PsbM, PsbT, PsbX, PsbY, PsbZ, Psb30/Ycf12, peripheral proteins PsbO, CyanoQ (PsbQ), PsbU, PsbV and a large number of cofactors. It forms dimeric complexes. The cofactor is Binds multiple chlorophylls and provides some of the ligands for the Ca-4Mn-5O cluster of the oxygen-evolving complex. It may also provide a ligand for a Cl- that is required for oxygen evolution. PSII binds additional chlorophylls, carotenoids and specific lipids..

Its subcellular location is the cellular thylakoid membrane. In terms of biological role, one of the components of the core complex of photosystem II (PSII). It binds chlorophyll and helps catalyze the primary light-induced photochemical processes of PSII. PSII is a light-driven water:plastoquinone oxidoreductase, using light energy to abstract electrons from H(2)O, generating O(2) and a proton gradient subsequently used for ATP formation. In Synechococcus elongatus (strain ATCC 33912 / PCC 7942 / FACHB-805) (Anacystis nidulans R2), this protein is Photosystem II CP43 reaction center protein.